The chain runs to 552 residues: Protein TRM32 (552 aa).

The disordered stretch occupies residues 295–379 (TDLPRDSSTS…NKTAEKTETL (85 aa)). Residues 331–351 (VRAEKEEKYEVQEERSQENHL) are compositionally biased toward basic and acidic residues. Over residues 352-371 (DSSNQRILQQEPDSVPSTNK) the composition is skewed to polar residues.

The sequence is that of Protein TRM32 (TRM32) from Arabidopsis thaliana (Mouse-ear cress).